The sequence spans 114 residues: Iron-sulfur cluster insertion protein ErpA (114 aa).

Iron-sulfur cluster contacts are provided by Cys-42, Cys-106, and Cys-108.

This sequence belongs to the HesB/IscA family. As to quaternary structure, homodimer. It depends on iron-sulfur cluster as a cofactor.

Functionally, required for insertion of 4Fe-4S clusters for at least IspG. This Haemophilus ducreyi (strain 35000HP / ATCC 700724) protein is Iron-sulfur cluster insertion protein ErpA.